A 377-amino-acid chain; its full sequence is NADH dehydrogenase [ubiquinone] 1 alpha subcomplex subunit 9, mitochondrial (377 aa).

The transit peptide at 1–35 directs the protein to the mitochondrion; the sequence is MAAAAQSRVVRVLSMSRSAITAIATSVCHGPPRRQ. K175 is subject to N6-succinyllysine. 2 positions are modified to N6-acetyllysine: K189 and K370.

Belongs to the complex I NDUFA9 subunit family. As to quaternary structure, complex I is composed of 45 different subunits. This a component of the hydrophobic protein fraction. Interacts with BLOC1S1. Interacts with SLC2A4. Interacts with CLOCK. Interacts with RAB5IF. FAD serves as cofactor. In terms of processing, acetylated on lysine residues. BLOC1S1 is required for acetylation. Acetylated by CLOCK in a circadian manner.

It localises to the mitochondrion matrix. Its function is as follows. Accessory subunit of the mitochondrial membrane respiratory chain NADH dehydrogenase (Complex I), that is believed not to be involved in catalysis. Complex I functions in the transfer of electrons from NADH to the respiratory chain. The immediate electron acceptor for the enzyme is believed to be ubiquinone. This is NADH dehydrogenase [ubiquinone] 1 alpha subcomplex subunit 9, mitochondrial (NDUFA9) from Pongo abelii (Sumatran orangutan).